The following is a 96-amino-acid chain: MENLRNGEDNGSLIPFTFFDQSSVTIPLLKCSGLESSSSSSSSCDLSSSHSEEDESIDIKEEEEEEEEDGMTIEIKARGKNKTKPTPSSGKGGKHN.

Positions 1 to 73 are excised as a propeptide; sequence MENLRNGEDN…EEEEEDGMTI (73 aa). The segment at 32–96 is disordered; sequence SGLESSSSSS…PSSGKGGKHN (65 aa). The segment covering 35–49 has biased composition (low complexity); it reads ESSSSSSSSCDLSSS. Acidic residues predominate over residues 52-71; sequence EEDESIDIKEEEEEEEEDGM.

This sequence belongs to the brassicaceae elicitor peptide family.

Functionally, elicitor of plant defense. In Arabidopsis thaliana (Mouse-ear cress), this protein is Elicitor peptide 3 (PEP3).